Here is a 318-residue protein sequence, read N- to C-terminus: Deoxyhypusine hydroxylase (318 aa).

His65, Glu66, His98, and Glu99 together coordinate Fe cation. 4 HEAT-like PBS-type repeats span residues 96–122 (VRHEAAEALGALGFTESLPVLEKYYKE), 194–220 (YRYRVMFRLRNIGNEEAVLALTDGFKD), 225–251 (FRHEIAFVFGQMIAPASVPALIKVLEN), and 258–284 (VRHEAAEALGGIANDECLPVLKKFSKD). The Fe cation site is built by His227, Glu228, His260, and Glu261.

It belongs to the deoxyhypusine hydroxylase family. Requires Fe(2+) as cofactor.

It localises to the cytoplasm. The protein localises to the nucleus. It catalyses the reaction [eIF5A protein]-deoxyhypusine + AH2 + O2 = [eIF5A protein]-hypusine + A + H2O. It participates in protein modification; eIF5A hypusination. Its function is as follows. Catalyzes the hydroxylation of the N(6)-(4-aminobutyl)-L-lysine intermediate to form hypusine, an essential post-translational modification only found in mature eIF-5A factor. The chain is Deoxyhypusine hydroxylase (lia1) from Schizosaccharomyces pombe (strain 972 / ATCC 24843) (Fission yeast).